Here is a 530-residue protein sequence, read N- to C-terminus: Alkyl hydroperoxide reductase subunit F (530 aa).

214 to 229 (DVLVVGGGPAGSAAAV) is a binding site for FAD. A disulfide bridge connects residues Cys-344 and Cys-347. NAD(+) is bound at residue 356–370 (RVAVIGGGNSGVEAA). 477–487 (TDVPGVFAAGD) is an FAD binding site.

It belongs to the class-II pyridine nucleotide-disulfide oxidoreductase family. Homodimer. FAD serves as cofactor.

Functionally, serves to protect the cell against DNA damage by alkyl hydroperoxides. It can use either NADH or NADPH as electron donor for direct reduction of redox dyes or of alkyl hydroperoxides when combined with the AhpC protein. In Xanthomonas campestris pv. phaseoli, this protein is Alkyl hydroperoxide reductase subunit F (ahpF).